The chain runs to 239 residues: L-cystine transport system permease protein TcyL (239 aa).

The region spanning 21–216 is the ABC transmembrane type-1 domain; the sequence is LPVTLYILTL…AVAVLFEWFF (196 aa). 4 helical membrane-spanning segments follow: residues 25–45, 69–89, 96–116, and 196–216; these read LYILTLSLLFGFVLGLFLALP, IMVQLFIVFYGIPALTGLIGI, PFYAAVATYALSNAAAAAEII, and EVYIALSIVYYAVAVLFEWFF.

It belongs to the binding-protein-dependent transport system permease family. As to quaternary structure, the complex is composed of two ATP-binding proteins (TcyN), two transmembrane proteins (TcyL and TcyM) and two solute-binding proteins (TcyJ and TcyK).

Its subcellular location is the cell membrane. Its function is as follows. Part of the ABC transporter complex TcyJKLMN involved in L-cystine import. Probably responsible for the translocation of the substrate across the membrane. Is also involved in cystathionine, djenkolate, and S-methylcysteine transport. The protein is L-cystine transport system permease protein TcyL (tcyL) of Bacillus subtilis (strain 168).